The following is a 355-amino-acid chain: WAT1-related protein At3g28130 (355 aa).

Transmembrane regions (helical) follow at residues A11–F31, Y42–F62, I80–Y100, T104–F124, S136–Y156, W186–L206, F218–V238, P244–F264, L290–G310, and S311–K331. The 126-residue stretch at T29 to V154 folds into the EamA domain.

The protein belongs to the drug/metabolite transporter (DMT) superfamily. Plant drug/metabolite exporter (P-DME) (TC 2.A.7.4) family.

The protein localises to the membrane. This is WAT1-related protein At3g28130 from Arabidopsis thaliana (Mouse-ear cress).